Here is a 444-residue protein sequence, read N- to C-terminus: Probable glycolate oxidase iron-sulfur subunit (444 aa).

4Fe-4S ferredoxin-type domains lie at 14-46 (FKERMDEGELLNCMRCGFCLPSCPTYIESGFQE) and 69-100 (EDVERSLSLCLGCRACEPVCPSGVKYGQLLEE). The [4Fe-4S] cluster site is built by cysteine 26, cysteine 29, cysteine 32, cysteine 36, cysteine 78, cysteine 81, cysteine 84, and cysteine 88.

In terms of assembly, the glycolate oxidase likely consists of several subunits including GlcD and GlcF. It depends on [4Fe-4S] cluster as a cofactor.

Its subcellular location is the cell membrane. It carries out the reaction glycolate + A = glyoxylate + AH2. It catalyses the reaction (R)-lactate + A = pyruvate + AH2. Functionally, component of a complex that catalyzes the oxidation of glycolate to glyoxylate. Is also able to oxidize D-lactate ((R)-lactate). Does not link directly to O(2), and 2,6-dichloroindophenol (DCIP) and phenazine methosulfate (PMS) can act as artificial electron acceptors in vitro, but the physiological molecule that functions as primary electron acceptor during glycolate oxidation is unknown. This is Probable glycolate oxidase iron-sulfur subunit (glcF) from Bacillus subtilis (strain 168).